A 469-amino-acid polypeptide reads, in one-letter code: Phosphatidylinositol 4-kinase type 2-alpha (469 aa).

Disordered stretches follow at residues 1-30 and 50-72; these read MDETSPLVSPDRDQTEYSYQSQCSPGATVP and TATSCGSAASGPSPPGSPCDQER. Residues 16–25 show a composition bias toward polar residues; the sequence is EYSYQSQCSP. Residues 50 to 60 show a composition bias toward low complexity; the sequence is TATSCGSAASG. The PI3K/PI4K catalytic domain occupies 115-443; that stretch reads DILPERISQG…VQTPPVIVET (329 aa). Positions 121-127 are G-loop; the sequence is ISQGSSG. ATP-binding positions include 122–128 and K143; that span reads SQGSSGS. The interval 148 to 150 is important for substrate binding; sequence EPY. Residues 156–169 form an important for interaction with membranes region; that stretch reads KWTKWLQKLCCPCC. 4 S-palmitoyl cysteine lipidation sites follow: C165, C166, C168, and C169. 252–255 contributes to the ATP binding site; it reads QIFV. An important for interaction with membranes region spans residues 259–267; that stretch reads KDADYWLRR. The catalytic loop stretch occupies residues 296-304; it reads RNTDRGNDN. Positions 334-354 are activation loop; that stretch reads AIDNGLAFPLKHPDSWRAYPF. D336 provides a ligand contact to ATP. An important for interaction with membranes region spans residues 349–358; it reads WRAYPFYWAW.

This sequence belongs to the PI3/PI4-kinase family. Type II PI4K subfamily.

It localises to the golgi apparatus. Its subcellular location is the trans-Golgi network membrane. The protein localises to the membrane raft. The protein resides in the endosome. It is found in the endosome membrane. It localises to the cytoplasmic vesicle. Its subcellular location is the cell projection. The protein localises to the dendrite. The protein resides in the presynaptic cell membrane. It is found in the synapse. It localises to the synaptosome. Its subcellular location is the mitochondrion. The protein localises to the membrane. The protein resides in the cell membrane. It is found in the perikaryon. It localises to the neuron projection. It carries out the reaction a 1,2-diacyl-sn-glycero-3-phospho-(1D-myo-inositol) + ATP = a 1,2-diacyl-sn-glycero-3-phospho-(1D-myo-inositol 4-phosphate) + ADP + H(+). Membrane-bound phosphatidylinositol-4 kinase (PI4-kinase) that catalyzes the phosphorylation of phosphatidylinositol (PI) to phosphatidylinositol 4-phosphate (PI4P), a lipid that plays important roles in endocytosis, Golgi function, protein sorting and membrane trafficking. Besides, phosphorylation of phosphatidylinositol (PI) to phosphatidylinositol 4-phosphate (PI4P) is the first committed step in the generation of phosphatidylinositol 4,5-bisphosphate (PIP2), a precursor of the second messenger inositol 1,4,5-trisphosphate (InsP3). This is Phosphatidylinositol 4-kinase type 2-alpha (pi4k2a) from Xenopus laevis (African clawed frog).